The following is an 894-amino-acid chain: Mitogen-activated protein kinase kinase kinase kinase 3 (894 aa).

Met1 is modified (N-acetylmethionine). Residues 16–273 form the Protein kinase domain; it reads FELIQRIGSG…AEKLLQHPFV (258 aa). Residues 22–30, Lys45, and Lys48 contribute to the ATP site; that span reads IGSGTYGDV. The active-site Proton acceptor is the Asp136. Phosphoserine is present on residues Ser329 and Ser398. Positions 410-536 are disordered; the sequence is AHLEDDEGDD…DVPKPISNGL (127 aa). Positions 473-487 are enriched in pro residues; it reads QVPPRPPPPRLPPHK. The span at 513–529 shows a compositional bias: basic and acidic residues; it reads NEHRGTNLSRKEKKDVP. In terms of domain architecture, CNH spans 556-867; that stretch reads PLKIHCASSW…IFRLLGSDRV (312 aa).

The protein belongs to the protein kinase superfamily. STE Ser/Thr protein kinase family. STE20 subfamily. Interacts with SH3GL2. Interaction appears to regulate MAP4K3-mediated JNK activation. Mg(2+) is required as a cofactor. Ubiquitously expressed in all tissues examined, with high levels in heart, brain, placenta, skeletal muscle, kidney and pancreas and lower levels in lung and liver.

The enzyme catalyses L-seryl-[protein] + ATP = O-phospho-L-seryl-[protein] + ADP + H(+). It carries out the reaction L-threonyl-[protein] + ATP = O-phospho-L-threonyl-[protein] + ADP + H(+). Serine/threonine kinase that plays a role in the response to environmental stress. Appears to act upstream of the JUN N-terminal pathway. Activator of the Hippo signaling pathway which plays a pivotal role in organ size control and tumor suppression by restricting proliferation and promoting apoptosis. MAP4Ks act in parallel to and are partially redundant with STK3/MST2 and STK4/MST2 in the phosphorylation and activation of LATS1/2, and establish MAP4Ks as components of the expanded Hippo pathway. In Homo sapiens (Human), this protein is Mitogen-activated protein kinase kinase kinase kinase 3.